A 429-amino-acid polypeptide reads, in one-letter code: Serine--tRNA ligase (429 aa).

Residue Thr235–Glu237 coordinates L-serine. An ATP-binding site is contributed by Arg266 to Glu268. Glu289 lines the L-serine pocket. Glu353–Ser356 is a binding site for ATP. An L-serine-binding site is contributed by Ser389.

Belongs to the class-II aminoacyl-tRNA synthetase family. Type-1 seryl-tRNA synthetase subfamily. In terms of assembly, homodimer. The tRNA molecule binds across the dimer.

The protein localises to the cytoplasm. The enzyme catalyses tRNA(Ser) + L-serine + ATP = L-seryl-tRNA(Ser) + AMP + diphosphate + H(+). The catalysed reaction is tRNA(Sec) + L-serine + ATP = L-seryl-tRNA(Sec) + AMP + diphosphate + H(+). Its pathway is aminoacyl-tRNA biosynthesis; selenocysteinyl-tRNA(Sec) biosynthesis; L-seryl-tRNA(Sec) from L-serine and tRNA(Sec): step 1/1. In terms of biological role, catalyzes the attachment of serine to tRNA(Ser). Is also able to aminoacylate tRNA(Sec) with serine, to form the misacylated tRNA L-seryl-tRNA(Sec), which will be further converted into selenocysteinyl-tRNA(Sec). This is Serine--tRNA ligase from Actinobacillus succinogenes (strain ATCC 55618 / DSM 22257 / CCUG 43843 / 130Z).